The sequence spans 81 residues: Antitoxin VapB20 (81 aa).

Antitoxin component of a type II toxin-antitoxin (TA) system. Neutralizes the toxic effect of cognate toxin VapC20. This chain is Antitoxin VapB20 (vapB20), found in Mycobacterium tuberculosis (strain CDC 1551 / Oshkosh).